The sequence spans 890 residues: Serine/threonine-protein kinase D3 (890 aa).

S6, S27, S37, S41, and S44 each carry phosphoserine. The Phorbol-ester/DAG-type 1 zinc finger occupies P154–C204. Phosphoserine is present on residues S213 and S216. The Phorbol-ester/DAG-type 2 zinc-finger motif lies at P271–C321. A disordered region spans residues S332 to F371. Residues S364, S391, and S395 each carry the phosphoserine modification. The region spanning T416–M532 is the PH domain. A Phosphotyrosine modification is found at Y426. Phosphoserine is present on S442. Y457 carries the phosphotyrosine modification. At T535 the chain carries Phosphothreonine. Phosphoserine is present on S539. In terms of domain architecture, Protein kinase spans I576 to L832. ATP is bound by residues L582–V590 and K605. The Proton acceptor role is filled by D699. S731 carries the phosphoserine; by PKC modification. Position 735 is a phosphoserine; by autocatalysis (S735). Y742 carries the post-translational modification Phosphotyrosine.

This sequence belongs to the protein kinase superfamily. CAMK Ser/Thr protein kinase family. PKD subfamily. Mg(2+) is required as a cofactor. Ubiquitous.

The protein localises to the cytoplasm. The protein resides in the membrane. The catalysed reaction is L-seryl-[protein] + ATP = O-phospho-L-seryl-[protein] + ADP + H(+). The enzyme catalyses L-threonyl-[protein] + ATP = O-phospho-L-threonyl-[protein] + ADP + H(+). Activated by DAG and phorbol esters. Phorbol-ester/DAG-type domains 1 and 2 bind both DAG and phorbol ester with high affinity and mediate translocation to the cell membrane. Autophosphorylation of Ser-735 and phosphorylation of Ser-731 by PKC relieves auto-inhibition by the PH domain. Its function is as follows. Converts transient diacylglycerol (DAG) signals into prolonged physiological effects, downstream of PKC. Involved in resistance to oxidative stress. This is Serine/threonine-protein kinase D3 (PRKD3) from Homo sapiens (Human).